The primary structure comprises 192 residues: Large ribosomal subunit protein bL9 (192 aa).

The segment at 172–192 (DALRPEDFFDPEADGVDEDEA) is disordered. The span at 179–192 (FFDPEADGVDEDEA) shows a compositional bias: acidic residues.

It belongs to the bacterial ribosomal protein bL9 family.

Its function is as follows. Binds to the 23S rRNA. The protein is Large ribosomal subunit protein bL9 of Rhizobium leguminosarum bv. trifolii (strain WSM2304).